A 175-amino-acid chain; its full sequence is Protein-export protein SecB (175 aa).

The interval 154–175 (QQGGNNNGSDSGIILPPGTTRQ) is disordered.

This sequence belongs to the SecB family. Homotetramer, a dimer of dimers. One homotetramer interacts with 1 SecA dimer.

The protein resides in the cytoplasm. In terms of biological role, one of the proteins required for the normal export of preproteins out of the cell cytoplasm. It is a molecular chaperone that binds to a subset of precursor proteins, maintaining them in a translocation-competent state. It also specifically binds to its receptor SecA. This chain is Protein-export protein SecB, found in Bordetella petrii (strain ATCC BAA-461 / DSM 12804 / CCUG 43448).